The following is a 671-amino-acid chain: Protein cereblon (671 aa).

A compositionally biased stretch (acidic residues) spans 1–11 (MDGEEAADIDE). Disordered regions lie at residues 1 to 59 (MDGE…VDGD), 104 to 130 (LTGT…PAQP), and 150 to 187 (GHNV…DAEA). 2 stretches are compositionally biased toward low complexity: residues 39 to 51 (QQQQ…SSGE) and 105 to 115 (TGTTTPTPTAP). Over residues 162-173 (SISSRHSGSDMS) the composition is skewed to polar residues. The 229-residue stretch at 309-537 (RMLIFMHQHI…IIGSTLKQES (229 aa)) folds into the Lon N-terminal domain. In terms of domain architecture, CULT spans 536–645 (ESLFYCRYCN…LAGSSVRIGK (110 aa)). Cysteine 541, cysteine 544, cysteine 610, and cysteine 613 together coordinate Zn(2+).

This sequence belongs to the CRBN family. Likely a component of a DCX (DDB1-CUL4-X-box) protein ligase complex. May interact with pic/DDB1. Post-translationally, ubiquitinated.

The protein localises to the nucleus. It participates in protein modification; protein ubiquitination. Substrate recognition component of a DCX (DDB1-CUL4-X-box) E3 protein ligase complex that mediates the ubiquitination and subsequent proteasomal degradation of target proteins. Has an essential role in mediating growth by negatively regulating insulin signaling. It also has a role in maintaining presynaptic function in the neuromuscular junction synapses of third-instar larvae. This Drosophila grimshawi (Hawaiian fruit fly) protein is Protein cereblon.